The following is a 586-amino-acid chain: Major facilitator superfamily domain-containing protein 6-like (586 aa).

A run of 2 helical transmembrane segments spans residues 50–70 (ILMGTKHLIATCWIPFCAFLA) and 78–98 (MFLTGSLLSSAGASLLMVLVP). The tract at residues 218 to 237 (GPVNLSKPQGDTQTPDHSSK) is disordered. Positions 223-237 (SKPQGDTQTPDHSSK) are enriched in polar residues. 9 consecutive transmembrane segments (helical) span residues 240–260 (PWTFILSLGVVVFWELLAAPL), 284–304 (LWVWKLLGVSAGVCGIAALVG), 318–338 (VIYFYSYSLVSTLALAVSTAF), 365–385 (LILLAFTVFWIGATASTVQDF), 397–417 (ELVMGFSVALSLLGEILFHPF), 428–448 (VGVLGLGLGCLALQVLYYAFI), 454–474 (VLPVQILSTISSGALWWAVGA), 494–514 (GHFYGSGCSLGSFVGGFVVLH), and 519–538 (VLYEACCVVLLLWLALFLSI).

Belongs to the major facilitator superfamily. MFSD6 family.

The protein resides in the membrane. The sequence is that of Major facilitator superfamily domain-containing protein 6-like (Mfsd6l) from Mus musculus (Mouse).